The primary structure comprises 132 residues: UPF0251 protein PTH_0588 (132 aa).

This sequence belongs to the UPF0251 family.

In Pelotomaculum thermopropionicum (strain DSM 13744 / JCM 10971 / SI), this protein is UPF0251 protein PTH_0588.